Here is a 375-residue protein sequence, read N- to C-terminus: Secondary metabolism regulator laeA (375 aa).

The span at Ala15–Gly26 shows a compositional bias: polar residues. 2 disordered regions span residues Ala15–Gln37 and Gln50–Tyr75.

This sequence belongs to the methyltransferase superfamily. LaeA methyltransferase family. Component of the heterotrimeric velvet complex composed of laeA, veA and velB; VeA acting as a bridging protein between laeA and velB.

The protein resides in the nucleus. The catalysed reaction is L-methionyl-[protein] + S-adenosyl-L-methionine = S-methyl-L-methionyl-[protein] + S-adenosyl-L-homocysteine. Functionally, methyltransferase that performs automethylation. No other methyl-accepting substrate has been identified yet. Component of the velvet transcription factor complex that acts as a global regulator for secondary metabolite gene expression. Controls the expression of the citric acid, demethylkotanin, orlandin, asperrubrol, tensidol B, atromentin and JBIR8 gene clusters. Also represses the expression of genes related to the production of BMS-192548 and aspernigrin A. The polypeptide is Secondary metabolism regulator laeA (Aspergillus niger (strain ATCC 1015 / CBS 113.46 / FGSC A1144 / LSHB Ac4 / NCTC 3858a / NRRL 328 / USDA 3528.7)).